Here is an 84-residue protein sequence, read N- to C-terminus: Putative UPF0320 protein YNL337W (84 aa).

It belongs to the UPF0320 family.

This is Putative UPF0320 protein YNL337W from Saccharomyces cerevisiae (strain ATCC 204508 / S288c) (Baker's yeast).